Consider the following 232-residue polypeptide: Endonuclease NucS (232 aa).

The protein belongs to the NucS endonuclease family.

It is found in the cytoplasm. Functionally, cleaves both 3' and 5' ssDNA extremities of branched DNA structures. This Mycobacteroides abscessus (strain ATCC 19977 / DSM 44196 / CCUG 20993 / CIP 104536 / JCM 13569 / NCTC 13031 / TMC 1543 / L948) (Mycobacterium abscessus) protein is Endonuclease NucS.